A 67-amino-acid polypeptide reads, in one-letter code: uncharacterized protein (67 aa).

This is an uncharacterized protein from Acidianus sp. F28 (AFV-2).